The following is a 147-amino-acid chain: D-aminoacyl-tRNA deacylase (147 aa).

The Gly-cisPro motif, important for rejection of L-amino acids motif lies at 137 to 138 (GP).

The protein belongs to the DTD family. As to quaternary structure, homodimer.

It is found in the cytoplasm. It catalyses the reaction glycyl-tRNA(Ala) + H2O = tRNA(Ala) + glycine + H(+). The catalysed reaction is a D-aminoacyl-tRNA + H2O = a tRNA + a D-alpha-amino acid + H(+). Its function is as follows. An aminoacyl-tRNA editing enzyme that deacylates mischarged D-aminoacyl-tRNAs. Also deacylates mischarged glycyl-tRNA(Ala), protecting cells against glycine mischarging by AlaRS. Acts via tRNA-based rather than protein-based catalysis; rejects L-amino acids rather than detecting D-amino acids in the active site. By recycling D-aminoacyl-tRNA to D-amino acids and free tRNA molecules, this enzyme counteracts the toxicity associated with the formation of D-aminoacyl-tRNA entities in vivo and helps enforce protein L-homochirality. In Bacillus pumilus (strain SAFR-032), this protein is D-aminoacyl-tRNA deacylase.